The primary structure comprises 517 residues: MKPNLKQWKQFMLFGICAWGLLFLVIFVYFTDSNSVEPVPSAFSYVESKKHFPLQGKQRAIMGAHQDQLFSYAIDDQDLLKEGILDSFIVGPGSMKKMAGADNYFESEQEFIMSKKTQKSTSNNHEDDDDEIYLHKNIDSVSGKKAPAYGKRYYHDTQRQHKKIRRNMQRKKQHMIEDSYDWNGFSSSMSKSFLQKLWKGNVSSKMLTPRLQKARREYLRANKLGVNFNGKQNSRKLNPQELLCVLKDRAQVKTLDGKDAPFSSLGWEKYFPKIALNKLYPHGFSTCAVVSSAGAILNSSLGAEIDSHDAVLRFNSAPTRNYEKDVGNKTTLRIINSQILTNPNHHFTDSSLYKDVTLIAWDPSPYYADLHMWYHKPDYNLFPPYEKHRKRNPDQPFYILHPKFTWELWKIIQENSNEKIQPNPPSSGFIGILIMMSMCRTVHVYEYIPSYRQTDLCHYHEQYYDAACTLGAYHPLLYEKMLIQRINQGTEDNLLRKGKVILPGFSSIHCPIKDHIT.

The Cytoplasmic segment spans residues 1–10; that stretch reads MKPNLKQWKQ. A helical; Signal-anchor for type II membrane protein transmembrane segment spans residues 11 to 31; sequence FMLFGICAWGLLFLVIFVYFT. At 32–517 the chain is on the lumenal side; the sequence is DSNSVEPVPS…IHCPIKDHIT (486 aa). 3 N-linked (GlcNAc...) asparagine glycosylation sites follow: Asn-201, Asn-298, and Asn-328. 3 cysteine pairs are disulfide-bonded: Cys-244-Cys-510, Cys-287-Cys-439, and Cys-457-Cys-468.

The protein belongs to the glycosyltransferase 29 family.

The protein localises to the golgi apparatus. It localises to the golgi stack membrane. The catalysed reaction is a beta-D-galactoside + CMP-N-acetyl-beta-neuraminate = an N-acetyl-alpha-neuraminyl-(2-&gt;6)-beta-D-galactosyl derivative + CMP + H(+). Its function is as follows. Transfers sialic acid from the donor of substrate CMP-sialic acid to galactose containing acceptor substrates. The protein is Beta-galactoside alpha-2,6-sialyltransferase 2 (st6gal2) of Xenopus tropicalis (Western clawed frog).